A 217-amino-acid polypeptide reads, in one-letter code: Dephospho-CoA kinase (217 aa).

The 200-residue stretch at 4 to 203 (IVALTGGISS…SHLSRIYNKN (200 aa)) folds into the DPCK domain. 12–17 (SSGKTT) provides a ligand contact to ATP.

Belongs to the CoaE family.

It localises to the cytoplasm. It carries out the reaction 3'-dephospho-CoA + ATP = ADP + CoA + H(+). Its pathway is cofactor biosynthesis; coenzyme A biosynthesis; CoA from (R)-pantothenate: step 5/5. In terms of biological role, catalyzes the phosphorylation of the 3'-hydroxyl group of dephosphocoenzyme A to form coenzyme A. This is Dephospho-CoA kinase from Buchnera aphidicola subsp. Acyrthosiphon pisum (strain APS) (Acyrthosiphon pisum symbiotic bacterium).